A 366-amino-acid chain; its full sequence is IgG receptor FcRn large subunit p51 (366 aa).

An N-terminal signal peptide occupies residues methionine 1–glycine 22. The interval alanine 23–threonine 111 is alpha-1. Over alanine 23–serine 298 the chain is Extracellular. N-linked (GlcNAc...) asparagine glycans are attached at residues asparagine 109, asparagine 126, asparagine 150, and asparagine 247. The alpha-2 stretch occupies residues phenylalanine 112 to lysine 201. Intrachain disulfides connect cysteine 120–cysteine 183 and cysteine 222–cysteine 276. The alpha-3 stretch occupies residues glutamate 202–leucine 291. Residues proline 203 to aspartate 290 form the Ig-like C1-type domain. The connecting peptide stretch occupies residues serine 293–serine 298. The chain crosses the membrane as a helical span at residues valine 299–tryptophan 322. The Cytoplasmic segment spans residues asparagine 323–serine 366. A Phosphoserine modification is found at serine 335. The tract at residues leucine 344–serine 366 is disordered.

Belongs to the immunoglobulin superfamily. FcRn complex consists of two subunits: p51, and p14 which is equivalent to beta-2-microglobulin. It forms an MHC class I-like heterodimer. Interacts with albumin/ALB; this interaction regulates ALB homeostasis. In terms of tissue distribution, intestinal epithelium.

It is found in the cell membrane. The protein localises to the endosome membrane. Cell surface receptor that transfers passive humoral immunity from the mother to the newborn. Binds to the Fc region of monomeric immunoglobulin gamma and mediates its selective uptake from milk. IgG in the milk is bound at the apical surface of the intestinal epithelium. The resultant FcRn-IgG complexes are transcytosed across the intestinal epithelium and IgG is released from FcRn into blood or tissue fluids. Throughout life, contributes to effective humoral immunity by recycling IgG and extending its half-life in the circulation. Mechanistically, monomeric IgG binding to FcRn in acidic endosomes of endothelial and hematopoietic cells recycles IgG to the cell surface where it is released into the circulation. In addition of IgG, regulates homeostasis of the other most abundant circulating protein albumin/ALB. This chain is IgG receptor FcRn large subunit p51 (Fcgrt), found in Rattus norvegicus (Rat).